The following is a 165-amino-acid chain: MTLSKNSHKEDQLEEKVLVVNRCSKVVKGGRKFSFSALILVGDGKGRLGCGFAKANELTDAIRKGGEAARKNLITIETLDGDSIPHEVLVDQDGAQLLLKPAKPGTGIVAGSRIRLILEMAGIKNIVAKSLGSNNPMNQVKAAFKALLSLSSRKDVLQRRRVTHD.

Positions 13 to 76 (LEEKVLVVNR…EAARKNLITI (64 aa)) constitute an S5 DRBM domain.

It belongs to the universal ribosomal protein uS5 family. Part of the 30S ribosomal subunit. Contacts proteins S4 and S8.

Its function is as follows. With S4 and S12 plays an important role in translational accuracy. Located at the back of the 30S subunit body where it stabilizes the conformation of the head with respect to the body. The polypeptide is Small ribosomal subunit protein uS5 (Chlamydia felis (strain Fe/C-56) (Chlamydophila felis)).